The sequence spans 263 residues: 3-methyl-2-oxobutanoate hydroxymethyltransferase (263 aa).

Asp-45 and Asp-84 together coordinate Mg(2+). 3-methyl-2-oxobutanoate contacts are provided by residues 45–46 (DS), Asp-84, and Lys-112. Glu-114 is a binding site for Mg(2+). Glu-180 functions as the Proton acceptor in the catalytic mechanism.

This sequence belongs to the PanB family. As to quaternary structure, homodecamer; pentamer of dimers. Mg(2+) is required as a cofactor.

It is found in the cytoplasm. The enzyme catalyses 3-methyl-2-oxobutanoate + (6R)-5,10-methylene-5,6,7,8-tetrahydrofolate + H2O = 2-dehydropantoate + (6S)-5,6,7,8-tetrahydrofolate. Its pathway is cofactor biosynthesis; (R)-pantothenate biosynthesis; (R)-pantoate from 3-methyl-2-oxobutanoate: step 1/2. Its function is as follows. Catalyzes the reversible reaction in which hydroxymethyl group from 5,10-methylenetetrahydrofolate is transferred onto alpha-ketoisovalerate to form ketopantoate. The sequence is that of 3-methyl-2-oxobutanoate hydroxymethyltransferase from Enterobacter sp. (strain 638).